Consider the following 455-residue polypeptide: Serine--tRNA ligase (455 aa).

252–254 (TAE) lines the L-serine pocket. Residues 283-285 (RKE) and valine 299 contribute to the ATP site. L-serine is bound at residue glutamate 306. ATP is bound at residue 370–373 (EVVS). Residue threonine 406 participates in L-serine binding.

This sequence belongs to the class-II aminoacyl-tRNA synthetase family. Type-1 seryl-tRNA synthetase subfamily. In terms of assembly, homodimer. The tRNA molecule binds across the dimer.

The protein resides in the cytoplasm. It carries out the reaction tRNA(Ser) + L-serine + ATP = L-seryl-tRNA(Ser) + AMP + diphosphate + H(+). It catalyses the reaction tRNA(Sec) + L-serine + ATP = L-seryl-tRNA(Sec) + AMP + diphosphate + H(+). Its pathway is aminoacyl-tRNA biosynthesis; selenocysteinyl-tRNA(Sec) biosynthesis; L-seryl-tRNA(Sec) from L-serine and tRNA(Sec): step 1/1. Functionally, catalyzes the attachment of serine to tRNA(Ser). Is also able to aminoacylate tRNA(Sec) with serine, to form the misacylated tRNA L-seryl-tRNA(Sec), which will be further converted into selenocysteinyl-tRNA(Sec). This is Serine--tRNA ligase from Thermococcus kodakarensis (strain ATCC BAA-918 / JCM 12380 / KOD1) (Pyrococcus kodakaraensis (strain KOD1)).